We begin with the raw amino-acid sequence, 569 residues long: Urease subunit alpha (569 aa).

One can recognise a Urease domain in the interval 131 to 569 (GGIDAHIHFI…VPMAQRYFLF (439 aa)). 3 residues coordinate Ni(2+): His-136, His-138, and Lys-219. The residue at position 219 (Lys-219) is an N6-carboxylysine. His-221 contacts substrate. Ni(2+)-binding residues include His-248 and His-274. His-322 functions as the Proton donor in the catalytic mechanism. Asp-362 lines the Ni(2+) pocket.

This sequence belongs to the metallo-dependent hydrolases superfamily. Urease alpha subunit family. In terms of assembly, heterotrimer of UreA (gamma), UreB (beta) and UreC (alpha) subunits. Three heterotrimers associate to form the active enzyme. Requires Ni cation as cofactor. Post-translationally, carboxylation allows a single lysine to coordinate two nickel ions.

The protein localises to the cytoplasm. It catalyses the reaction urea + 2 H2O + H(+) = hydrogencarbonate + 2 NH4(+). The protein operates within nitrogen metabolism; urea degradation; CO(2) and NH(3) from urea (urease route): step 1/1. The polypeptide is Urease subunit alpha (Bacillus sp. (strain TB-90)).